The following is a 397-amino-acid chain: ATP-dependent RNA helicase eIF4A (397 aa).

The Q motif motif lies at 24–52 (DSFDEMNLKPELLRGIYAYGFERPSAIQQ). The region spanning 55-225 (IMPVIKGHDV…TKFMREPVRI (171 aa)) is the Helicase ATP-binding domain. ATP is bound at residue 68 to 75 (AQSGTGKT). The DEAD box motif lies at 173 to 176 (DEAD). The region spanning 236–397 (GIKQFYIAVE…EMPMNVADLI (162 aa)) is the Helicase C-terminal domain.

It belongs to the DEAD box helicase family. eIF4A subfamily. Component of the eIF4F complex, which composition varies with external and internal environmental conditions. It is composed of at least eIF4A, eIF4E and eIF4G.

The protein localises to the cytoplasm. The catalysed reaction is ATP + H2O = ADP + phosphate + H(+). Functionally, ATP-dependent RNA helicase which is a subunit of the eIF4F complex involved in cap recognition and is required for mRNA binding to ribosome. In the current model of translation initiation, eIF4A unwinds RNA secondary structures in the 5'-UTR of mRNAs which is necessary to allow efficient binding of the small ribosomal subunit, and subsequent scanning for the initiator codon. This is ATP-dependent RNA helicase eIF4A (tif-1) from Neurospora crassa (strain ATCC 24698 / 74-OR23-1A / CBS 708.71 / DSM 1257 / FGSC 987).